A 117-amino-acid chain; its full sequence is Immunoglobulin kappa variable 1-27 (117 aa).

The signal sequence occupies residues 1 to 22 (MDMRVPAQLLGLLLLWLPDTRC). The framework-1 stretch occupies residues 23–45 (DIQMTQSPSSLSASVGDRVTITC). Residues 23–117 (DIQMTQSPSS…YYCQKYNSAP (95 aa)) form the Ig-like domain. An intrachain disulfide couples C45 to C110. Residues 46–56 (RASQGISNYLA) form a complementarity-determining-1 region. The tract at residues 57 to 71 (WYQQKPGKVPKLLIY) is framework-2. A complementarity-determining-2 region spans residues 72-78 (AASTLQS). Residues 79–110 (GVPSRFSGSGSGTDFTLTISSLQPEDVATYYC) form a framework-3 region. The segment at 111–117 (QKYNSAP) is complementarity-determining-3.

Immunoglobulins are composed of two identical heavy chains and two identical light chains; disulfide-linked.

It localises to the secreted. It is found in the cell membrane. Its function is as follows. V region of the variable domain of immunoglobulin light chains that participates in the antigen recognition. Immunoglobulins, also known as antibodies, are membrane-bound or secreted glycoproteins produced by B lymphocytes. In the recognition phase of humoral immunity, the membrane-bound immunoglobulins serve as receptors which, upon binding of a specific antigen, trigger the clonal expansion and differentiation of B lymphocytes into immunoglobulins-secreting plasma cells. Secreted immunoglobulins mediate the effector phase of humoral immunity, which results in the elimination of bound antigens. The antigen binding site is formed by the variable domain of one heavy chain, together with that of its associated light chain. Thus, each immunoglobulin has two antigen binding sites with remarkable affinity for a particular antigen. The variable domains are assembled by a process called V-(D)-J rearrangement and can then be subjected to somatic hypermutations which, after exposure to antigen and selection, allow affinity maturation for a particular antigen. In Homo sapiens (Human), this protein is Immunoglobulin kappa variable 1-27.